The sequence spans 207 residues: LexA repressor (207 aa).

The H-T-H motif DNA-binding region spans valine 28–alanine 48. Catalysis depends on for autocatalytic cleavage activity residues serine 129 and lysine 167.

It belongs to the peptidase S24 family. As to quaternary structure, homodimer.

It catalyses the reaction Hydrolysis of Ala-|-Gly bond in repressor LexA.. Functionally, represses a number of genes involved in the response to DNA damage (SOS response), including recA and lexA. In the presence of single-stranded DNA, RecA interacts with LexA causing an autocatalytic cleavage which disrupts the DNA-binding part of LexA, leading to derepression of the SOS regulon and eventually DNA repair. The polypeptide is LexA repressor (Geobacillus sp. (strain WCH70)).